A 274-amino-acid polypeptide reads, in one-letter code: 2,3,4,5-tetrahydropyridine-2,6-dicarboxylate N-succinyltransferase (274 aa).

Substrate contacts are provided by Arg104 and Asp141.

It belongs to the transferase hexapeptide repeat family. In terms of assembly, homotrimer.

The protein resides in the cytoplasm. It carries out the reaction (S)-2,3,4,5-tetrahydrodipicolinate + succinyl-CoA + H2O = (S)-2-succinylamino-6-oxoheptanedioate + CoA. It functions in the pathway amino-acid biosynthesis; L-lysine biosynthesis via DAP pathway; LL-2,6-diaminopimelate from (S)-tetrahydrodipicolinate (succinylase route): step 1/3. The polypeptide is 2,3,4,5-tetrahydropyridine-2,6-dicarboxylate N-succinyltransferase (Wigglesworthia glossinidia brevipalpis).